The following is a 373-amino-acid chain: MAAPASATESQASGGPRPPACLLVLGMAGSGKTTFVQRLTGYLHSQGCPPYVINLDPAVHEVPFPANIDIRDTVKYKEVMKQYGLGPNGGIVTSLNLFATRFDQVMKFIEKAQNMSKYVLIDTPGQIEVFTWSASGTIITEALASSFPTIVIYVMDTSRSTNPVTFMSNMLYACSILYKTKLPFIVVMNKTDIIDHSFAVEWMQDFEAFQDALNQETTYVSNLTRSMSLVLDEFYSSLRVVGVSAVLGTGLDELFVQVASATEEYEREYRPEYERLKKSLASAQSQQQKEQLERLQKDMGSVALDTGTATGSSSPVLDPSDLILTRGTLDEEDEEADSDTDDIDHRVTEESREEPAFQNFMQESMAQYWKKNK.

An N-acetylalanine modification is found at alanine 2. Position 29-34 (29-34) interacts with GTP; that stretch reads GSGKTT. A Gly-Pro-Asn (GPN)-loop; involved in dimer interface motif is present at residues 86–88; the sequence is GPN. 189–192 contributes to the GTP binding site; the sequence is NKTD. Serine 301, serine 312, and serine 314 each carry phosphoserine. Positions 304–373 are disordered; that stretch reads LDTGTATGSS…SMAQYWKKNK (70 aa). At threonine 328 the chain carries Phosphothreonine. Residues 330–342 show a composition bias toward acidic residues; sequence DEEDEEADSDTDD. Position 338 is a phosphoserine (serine 338). Threonine 340 bears the Phosphothreonine mark. Basic and acidic residues predominate over residues 343–355; that stretch reads IDHRVTEESREEP.

Belongs to the GPN-loop GTPase family. In terms of assembly, heterodimer with GPN3. Binds to RNA polymerase II (RNAPII). Interacts directly with RNAPII subunits RPB4 and RPB7 and the CTD of RPB1. Interacts with XPA.

The protein localises to the cytoplasm. It localises to the nucleus. Small GTPase required for proper nuclear import of RNA polymerase II (RNAPII). May act at an RNAP assembly step prior to nuclear import. Forms an interface between the RNA polymerase II enzyme and chaperone/scaffolding proteins, suggesting that it is required to connect RNA polymerase II to regulators of protein complex formation. May be involved in nuclear localization of XPA. The polypeptide is GPN-loop GTPase 1 (Bos taurus (Bovine)).